The sequence spans 227 residues: Large ribosomal subunit protein uL3 (227 aa).

N5-methylglutamine is present on Gln-151.

Belongs to the universal ribosomal protein uL3 family. Part of the 50S ribosomal subunit. Forms a cluster with proteins L14 and L19. Methylated by PrmB.

In terms of biological role, one of the primary rRNA binding proteins, it binds directly near the 3'-end of the 23S rRNA, where it nucleates assembly of the 50S subunit. In Gluconobacter oxydans (strain 621H) (Gluconobacter suboxydans), this protein is Large ribosomal subunit protein uL3.